A 243-amino-acid polypeptide reads, in one-letter code: Type III pantothenate kinase (243 aa).

7–14 is an ATP binding site; it reads DLGNSRFK. Residues tyrosine 91 and 98–101 contribute to the substrate site; that span reads GVDR. Catalysis depends on aspartate 100, which acts as the Proton acceptor. Threonine 122 is an ATP binding site. Substrate is bound at residue threonine 172.

This sequence belongs to the type III pantothenate kinase family. As to quaternary structure, homodimer. NH4(+) is required as a cofactor. Requires K(+) as cofactor.

The protein resides in the cytoplasm. The enzyme catalyses (R)-pantothenate + ATP = (R)-4'-phosphopantothenate + ADP + H(+). Its pathway is cofactor biosynthesis; coenzyme A biosynthesis; CoA from (R)-pantothenate: step 1/5. Catalyzes the phosphorylation of pantothenate (Pan), the first step in CoA biosynthesis. This is Type III pantothenate kinase from Stenotrophomonas maltophilia (strain R551-3).